The sequence spans 341 residues: MKFLDQAKVYIRSGNGGSGAVSFRREKFIEFGGPDGGNGGRGGDVWALVVDGLNTLIDYRYQQHFKAKTGGHGKGRNMTGEKGGDVILKVPVGTQIFEEDNTTLICDLTEVGQRYRLAKGGNGGFGNLHFTTSTNRAPRRANPGLAGEERAIWLRLKLIADAGLVGLPNAGKSTFLSSVTAAKPKVADYPFTTLHPHLGVVRIDGREFVLADIPGLIEGAHEGVGIGDRFLGHVERCRVLLHLISAQEEDVAKAYQIVRHELEAYGNNLSDKTEIVALSQIDTLTIEERKMKQKALRRVTDQPVMMFSAVSREGLENVLRAGAHIIEMSRKEEMGGDSRID.

The region spanning 1–159 is the Obg domain; that stretch reads MKFLDQAKVY…RAIWLRLKLI (159 aa). The region spanning 160–327 is the OBG-type G domain; the sequence is ADAGLVGLPN…VLRAGAHIIE (168 aa). GTP is bound by residues 166–173, 191–195, 212–215, 279–282, and 308–310; these read GLPNAGKS, FTTLH, DIPG, SQID, and SAV. Ser173 and Thr193 together coordinate Mg(2+).

The protein belongs to the TRAFAC class OBG-HflX-like GTPase superfamily. OBG GTPase family. In terms of assembly, monomer. Mg(2+) serves as cofactor.

Its subcellular location is the cytoplasm. Its function is as follows. An essential GTPase which binds GTP, GDP and possibly (p)ppGpp with moderate affinity, with high nucleotide exchange rates and a fairly low GTP hydrolysis rate. Plays a role in control of the cell cycle, stress response, ribosome biogenesis and in those bacteria that undergo differentiation, in morphogenesis control. The protein is GTPase Obg of Bartonella tribocorum (strain CIP 105476 / IBS 506).